The primary structure comprises 568 residues: Proline--tRNA ligase (568 aa).

The protein belongs to the class-II aminoacyl-tRNA synthetase family. ProS type 1 subfamily. In terms of assembly, homodimer.

It is found in the cytoplasm. The catalysed reaction is tRNA(Pro) + L-proline + ATP = L-prolyl-tRNA(Pro) + AMP + diphosphate. Functionally, catalyzes the attachment of proline to tRNA(Pro) in a two-step reaction: proline is first activated by ATP to form Pro-AMP and then transferred to the acceptor end of tRNA(Pro). As ProRS can inadvertently accommodate and process non-cognate amino acids such as alanine and cysteine, to avoid such errors it has two additional distinct editing activities against alanine. One activity is designated as 'pretransfer' editing and involves the tRNA(Pro)-independent hydrolysis of activated Ala-AMP. The other activity is designated 'posttransfer' editing and involves deacylation of mischarged Ala-tRNA(Pro). The misacylated Cys-tRNA(Pro) is not edited by ProRS. The chain is Proline--tRNA ligase from Halorhodospira halophila (strain DSM 244 / SL1) (Ectothiorhodospira halophila (strain DSM 244 / SL1)).